A 484-amino-acid polypeptide reads, in one-letter code: tRNA sulfurtransferase (484 aa).

A THUMP domain is found at glutamine 63–arginine 167. Residues leucine 185–isoleucine 186, lysine 267, glycine 289, and glutamine 298 each bind ATP. Cysteine 346 and cysteine 458 are joined by a disulfide. In terms of domain architecture, Rhodanese spans isoleucine 406–proline 484. Cysteine 458 serves as the catalytic Cysteine persulfide intermediate.

The protein belongs to the ThiI family.

It is found in the cytoplasm. The enzyme catalyses [ThiI sulfur-carrier protein]-S-sulfanyl-L-cysteine + a uridine in tRNA + 2 reduced [2Fe-2S]-[ferredoxin] + ATP + H(+) = [ThiI sulfur-carrier protein]-L-cysteine + a 4-thiouridine in tRNA + 2 oxidized [2Fe-2S]-[ferredoxin] + AMP + diphosphate. It catalyses the reaction [ThiS sulfur-carrier protein]-C-terminal Gly-Gly-AMP + S-sulfanyl-L-cysteinyl-[cysteine desulfurase] + AH2 = [ThiS sulfur-carrier protein]-C-terminal-Gly-aminoethanethioate + L-cysteinyl-[cysteine desulfurase] + A + AMP + 2 H(+). The protein operates within cofactor biosynthesis; thiamine diphosphate biosynthesis. Catalyzes the ATP-dependent transfer of a sulfur to tRNA to produce 4-thiouridine in position 8 of tRNAs, which functions as a near-UV photosensor. Also catalyzes the transfer of sulfur to the sulfur carrier protein ThiS, forming ThiS-thiocarboxylate. This is a step in the synthesis of thiazole, in the thiamine biosynthesis pathway. The sulfur is donated as persulfide by IscS. The chain is tRNA sulfurtransferase from Shewanella putrefaciens (strain CN-32 / ATCC BAA-453).